The sequence spans 446 residues: D(1A) dopamine receptor (446 aa).

The Extracellular portion of the chain corresponds to 1 to 22 (MAPNTSTMDETGLPVERDFSFR). Asparagine 4 carries an N-linked (GlcNAc...) asparagine glycan. A helical membrane pass occupies residues 23-48 (ILTACFLSLLILSTLLGNTLVCAAVI). Residues 49–59 (RFRHLRSKVTN) lie on the Cytoplasmic side of the membrane. Residues 60–86 (FFVISLAVSDLLVAVLVMPWKAVAEIA) form a helical membrane-spanning segment. The Extracellular segment spans residues 87 to 95 (GFWPFGSFC). Cysteine 95 and cysteine 186 form a disulfide bridge. Residues 96 to 118 (NIWVAFDIMCSTASILNLCVISV) traverse the membrane as a helical segment. The Cytoplasmic segment spans residues 119–137 (DRYWAISSPFQYERKMTPK). The helical transmembrane segment at 138–162 (AAFILISVAWTLSVLISFIPVQLSW) threads the bilayer. Topologically, residues 163 to 192 (HKAKPTWPLDGNFTSLEDAEDDNCDTRLSR) are extracellular. Residues 193–218 (TYAISSSLISFYIPVAIMIVTYTSIY) traverse the membrane as a helical segment. Residues 219 to 272 (RIAQKQIRRISALERAAVHAKNCQTTTGNGNPVECSQSESSFKMSFKRETKVLK) are Cytoplasmic-facing. Residues 273-299 (TLSVIMGVFVCCWLPFFISNCMVPFCG) traverse the membrane as a helical segment. Residues 300–312 (SEETQPFCIDSIT) are Extracellular-facing. Residues 313 to 337 (FDVFVWFGWANSSLNPIIYAFNADF) traverse the membrane as a helical segment. Residues 338 to 446 (QKAFSTLLGC…PVTHSGQHST (109 aa)) lie on the Cytoplasmic side of the membrane. Residues cysteine 347 and cysteine 351 are each lipidated (S-palmitoyl cysteine). Phosphoserine is present on serine 441.

Belongs to the G-protein coupled receptor 1 family. As to quaternary structure, interacts with DNAJC14 via its C-terminus. Interacts with DRD2. Interacts with DORIP1.

It localises to the cell membrane. It is found in the endoplasmic reticulum membrane. The protein resides in the cell projection. Its subcellular location is the cilium membrane. The protein localises to the dendrite. It localises to the dendritic spine. Functionally, dopamine receptor whose activity is mediated by G proteins which activate adenylyl cyclase. This Mus musculus (Mouse) protein is D(1A) dopamine receptor (Drd1).